A 221-amino-acid polypeptide reads, in one-letter code: Glutathione S-transferase 1 (221 aa).

In terms of domain architecture, GST N-terminal spans 7–88 (QKMQLYSFSL…YLEEKFPENP (82 aa)). Residues 17-22 (SSCAWR), Val60, 72-73 (DS), Gln112, and 116-118 (NLA) each bind glutathione. One can recognise a GST C-terminal domain in the interval 93–221 (DLQKRALNYQ…ISPMLDEAKS (129 aa)).

It belongs to the GST superfamily. Zeta family.

The catalysed reaction is RX + glutathione = an S-substituted glutathione + a halide anion + H(+). Its function is as follows. Conjugation of reduced glutathione to a wide number of exogenous and endogenous hydrophobic electrophiles. The sequence is that of Glutathione S-transferase 1 (GST1) from Dianthus caryophyllus (Carnation).